Consider the following 458-residue polypeptide: Phosphomethylpyrimidine synthase (458 aa).

Substrate-binding positions include N80, M109, Y139, H175, 195–197 (SRG), 236–239 (DSLR), and E275. H279 contributes to the Zn(2+) binding site. Y302 provides a ligand contact to substrate. H343 is a binding site for Zn(2+). [4Fe-4S] cluster-binding residues include C423, C426, and C431.

Belongs to the ThiC family. [4Fe-4S] cluster serves as cofactor.

The catalysed reaction is 5-amino-1-(5-phospho-beta-D-ribosyl)imidazole + S-adenosyl-L-methionine = 4-amino-2-methyl-5-(phosphooxymethyl)pyrimidine + CO + 5'-deoxyadenosine + formate + L-methionine + 3 H(+). Its pathway is cofactor biosynthesis; thiamine diphosphate biosynthesis. In terms of biological role, catalyzes the synthesis of the hydroxymethylpyrimidine phosphate (HMP-P) moiety of thiamine from aminoimidazole ribotide (AIR) in a radical S-adenosyl-L-methionine (SAM)-dependent reaction. The sequence is that of Phosphomethylpyrimidine synthase from Acaryochloris marina (strain MBIC 11017).